We begin with the raw amino-acid sequence, 344 residues long: L-rhamnose-proton symporter (344 aa).

Transmembrane regions (helical) follow at residues 4-24 (AITM…CFYA), 38-58 (WSVG…ALLL), 68-88 (FSLS…IGNI), 101-121 (MGIG…TPII), 137-157 (TLLG…AGQL), 175-195 (LVLA…MNAA), 214-234 (LPSY…FCFI), 259-279 (VLLS…YAWG), 290-310 (ISWM…GLVL), and 323-343 (VLSL…MGMA).

The protein belongs to the L-rhamnose transporter (TC 2.A.7.6) family.

The protein resides in the cell inner membrane. It carries out the reaction L-rhamnopyranose(in) + H(+)(in) = L-rhamnopyranose(out) + H(+)(out). In terms of biological role, uptake of L-rhamnose across the cytoplasmic membrane with the concomitant transport of protons into the cell (symport system). This Escherichia coli O157:H7 protein is L-rhamnose-proton symporter.